A 243-amino-acid polypeptide reads, in one-letter code: uncharacterized protein (243 aa).

This is an uncharacterized protein from Acanthamoeba polyphaga (Amoeba).